Reading from the N-terminus, the 161-residue chain is DNA-directed RNA polymerase 19 kDa subunit (161 aa).

Residues 1–32 are compositionally biased toward acidic residues; that stretch reads MADTDDIIDYESDDLTEYEDDEEDGESLETSD. The tract at residues 1–35 is disordered; it reads MADTDDIIDYESDDLTEYEDDEEDGESLETSDIDP.

It belongs to the poxviridae DNA-directed RNA polymerase 19 kDa subunit family. As to quaternary structure, the DNA-dependent RNA polymerase used for intermediate and late genes expression consists of eight subunits Rpo30/OPG66, Rpo7/OPG90, Rpo22/OPG103, Rpo147/OPG105, Rpo18/OPG119, Rpo19/OPG131, Rpo132/OPG151 and Rpo35/OPG156. The same holoenzyme, with the addition of the transcription-specificity factor OPG109, is used for early gene expression.

It localises to the virion. The enzyme catalyses RNA(n) + a ribonucleoside 5'-triphosphate = RNA(n+1) + diphosphate. Its function is as follows. Part of the DNA-dependent RNA polymerase which catalyzes the transcription of viral DNA into RNA using the four ribonucleoside triphosphates as substrates. Responsible for the transcription of early, intermediate and late genes. DNA-dependent RNA polymerase associates with the early transcription factor (ETF), itself composed of OPG118 and OPG133, thereby allowing the early genes transcription. Late transcription, and probably also intermediate transcription, require newly synthesized RNA polymerase. This Monkeypox virus protein is DNA-directed RNA polymerase 19 kDa subunit (OPG131).